The chain runs to 184 residues: Urease accessory protein UreE (184 aa).

The interval 147–184 (EHHGHSHSHSHSHDHDHDHDHDHQHGPSCSHGHHHGHR) is disordered. Over residues 157 to 171 (HSHDHDHDHDHDHQH) the composition is skewed to basic and acidic residues.

Belongs to the UreE family.

The protein resides in the cytoplasm. In terms of biological role, involved in urease metallocenter assembly. Binds nickel. Probably functions as a nickel donor during metallocenter assembly. The chain is Urease accessory protein UreE from Burkholderia mallei (strain ATCC 23344).